Consider the following 85-residue polypeptide: Major outer membrane protein 1 (85 aa).

The N-terminal stretch at 1–18 is a signal peptide; it reads MEAREVEEMRRSRLLTLG. The helical transmembrane segment at 22 to 42 threads the bilayer; the sequence is YTAVIALAALVLVMGALGLVL.

As to quaternary structure, forms extremely stable complexes with apparent masses of 150, 50, 45 and 38 kDa. Found in a ring-shaped complex of 7 nm diameter with a 2 nm channel through the middle. Complete denaturation requires temperatures over 110 degrees Celsius.

The protein resides in the cell outer membrane. Functionally, the most abundant protein of the outer membrane, it forms a pore through it. The chain is Major outer membrane protein 1 (ihomp1) from Ignicoccus hospitalis (strain KIN4/I / DSM 18386 / JCM 14125).